An 809-amino-acid chain; its full sequence is Lon protease (809 aa).

The Lon N-terminal domain maps to Leu-42–Leu-242. Gly-395 to Thr-402 contributes to the ATP binding site. The Lon proteolytic domain occupies Leu-629–Gly-809. Active-site residues include Ser-716 and Lys-759.

Belongs to the peptidase S16 family. Homohexamer. Organized in a ring with a central cavity.

Its subcellular location is the cytoplasm. The catalysed reaction is Hydrolysis of proteins in presence of ATP.. Its function is as follows. ATP-dependent serine protease that mediates the selective degradation of mutant and abnormal proteins as well as certain short-lived regulatory proteins. Required for cellular homeostasis and for survival from DNA damage and developmental changes induced by stress. Degrades polypeptides processively to yield small peptide fragments that are 5 to 10 amino acids long. Binds to DNA in a double-stranded, site-specific manner. In Magnetococcus marinus (strain ATCC BAA-1437 / JCM 17883 / MC-1), this protein is Lon protease.